Consider the following 789-residue polypeptide: Probable 3-hydroxyacyl-CoA dehydrogenase (789 aa).

It belongs to the 3-hydroxyacyl-CoA dehydrogenase family.

The catalysed reaction is a (3S)-3-hydroxyacyl-CoA + NAD(+) = a 3-oxoacyl-CoA + NADH + H(+). It participates in lipid metabolism; fatty acid beta-oxidation. Functionally, involved in the degradation of long-chain fatty acids. In Bacillus subtilis (strain 168), this protein is Probable 3-hydroxyacyl-CoA dehydrogenase (fadN).